The chain runs to 315 residues: Diacylglycerol kinase (315 aa).

Positions 1 to 132 (MRKRARIIYN…VDIGKMNNRY (132 aa)) constitute a DAGKc domain. Residues 10–14 (NPTSG), Thr-41, 67–73 (GDGTLNE), and Thr-94 each bind ATP. Mg(2+)-binding residues include Lys-213, Asp-216, and Tyr-218. Glu-273 (proton acceptor) is an active-site residue.

It belongs to the diacylglycerol/lipid kinase family. In terms of assembly, homodimer. Mg(2+) is required as a cofactor.

The enzyme catalyses a 1,2-diacyl-sn-glycerol + ATP = a 1,2-diacyl-sn-glycero-3-phosphate + ADP + H(+). In terms of biological role, catalyzes the phosphorylation of diacylglycerol (DAG) into phosphatidic acid. Is a key enzyme involved in the production of lipoteichoic acid by reintroducing DAG formed from the breakdown of membrane phospholipids into the phosphatidylglycerol biosynthetic pathway. The polypeptide is Diacylglycerol kinase (dagK) (Staphylococcus aureus (strain bovine RF122 / ET3-1)).